The sequence spans 240 residues: Glyceraldehyde 3-phosphate phosphatase (240 aa).

Belongs to the HAD-like hydrolase superfamily. Requires Mg(2+) as cofactor.

Functionally, catalyzes the dephosphorylation of D,L-glyceraldehyde 3-phosphate in vitro. The protein is Glyceraldehyde 3-phosphate phosphatase of Pyrococcus furiosus (strain ATCC 43587 / DSM 3638 / JCM 8422 / Vc1).